The following is a 178-amino-acid chain: MAASLGGMFAGQPPGPPPPPPGLPGQASLLQAAPGAPRPSNSTLVDELESSFEACFASLVSQDYVNGTDQEEIRTGVDQCIQKFLDIARQTECFFLQKRLQLSVQKPDQVIKEDVSELRSELQRKDALVQKHLTKLRHWQQVLEDINVQHKKPADMPQGSLAYLEQASANIPAPLKQT.

A disordered region spans residues 1–43 (MAASLGGMFAGQPPGPPPPPPGLPGQASLLQAAPGAPRPSNST). The segment covering 13–23 (PPGPPPPPPGL) has biased composition (pro residues). Residues 109 to 145 (QVIKEDVSELRSELQRKDALVQKHLTKLRHWQQVLED) are a coiled coil.

The protein belongs to the Mediator complex subunit 28 family. In terms of assembly, forms a ternary complex with NF2/merlin and GRB2. Binds to actin. Component of the Mediator complex, which is probably composed of MED1, MED4, MED6, MED7, MED8, MED9, MED10, MED11, MED12, MED13, MED13L, MED14, MED15, MED16, MED17, MED18, MED19, MED20, MED21, MED22, MED23, MED24, MED25, MED26, MED27, MED29, MED30, MED31, CCNC, CDK8 and CDC2L6/CDK11. The MED12, MED13, CCNC and CDK8 subunits form a distinct module termed the CDK8 module. Mediator containing the CDK8 module is less active than Mediator lacking this module in supporting transcriptional activation. Individual preparations of the Mediator complex lacking one or more distinct subunits have been variously termed ARC, CRSP, DRIP, PC2, SMCC and TRAP.

Its subcellular location is the nucleus. It localises to the cytoplasm. The protein resides in the membrane. May be part of a complex containing NF2/merlin that participates in cellular signaling to the actin cytoskeleton downstream of tyrosine kinase signaling pathways. Component of the Mediator complex, a coactivator involved in the regulated transcription of nearly all RNA polymerase II-dependent genes. Mediator functions as a bridge to convey information from gene-specific regulatory proteins to the basal RNA polymerase II transcription machinery. Mediator is recruited to promoters by direct interactions with regulatory proteins and serves as a scaffold for the assembly of a functional preinitiation complex with RNA polymerase II and the general transcription factors. In Rattus norvegicus (Rat), this protein is Mediator of RNA polymerase II transcription subunit 28 (Med28).